The primary structure comprises 247 residues: Ras-like protein family member 11B (247 aa).

Positions 28 to 245 (AGRRLVKIAV…ALSAKVRTVT (218 aa)) are small GTPase-like. Residues 39–46 (GASGVGKT), 86–93 (DTPGIQVH), and 151–154 (NKAD) contribute to the GTP site. The disordered stretch occupies residues 202 to 228 (PKQQPSSTPEKRRTSLIPRPKSPNMQD).

It belongs to the small GTPase superfamily. Ras family.

The catalysed reaction is GTP + H2O = GDP + phosphate + H(+). The sequence is that of Ras-like protein family member 11B from Mus musculus (Mouse).